A 246-amino-acid polypeptide reads, in one-letter code: Bis(5'-nucleosyl)-tetraphosphatase PrpE [asymmetrical] (246 aa).

Belongs to the PrpE family. Requires Ni(2+) as cofactor.

It carries out the reaction P(1),P(4)-bis(5'-guanosyl) tetraphosphate + H2O = GMP + GTP + 2 H(+). In terms of biological role, asymmetrically hydrolyzes Ap4p to yield AMP and ATP. In Bacillus cereus (strain AH187), this protein is Bis(5'-nucleosyl)-tetraphosphatase PrpE [asymmetrical].